Here is a 252-residue protein sequence, read N- to C-terminus: Large ribosomal subunit protein uL4 (252 aa).

The protein belongs to the universal ribosomal protein uL4 family. Part of the 50S ribosomal subunit.

One of the primary rRNA binding proteins, this protein initially binds near the 5'-end of the 23S rRNA. It is important during the early stages of 50S assembly. It makes multiple contacts with different domains of the 23S rRNA in the assembled 50S subunit and ribosome. Functionally, forms part of the polypeptide exit tunnel. This Methanococcus maripaludis (strain C6 / ATCC BAA-1332) protein is Large ribosomal subunit protein uL4.